The sequence spans 285 residues: MTTNDTWFTEHFQTTGSAIGFRVTGKLDEVQSPFQKIEIYNSTDWGKLMVIDGALMLTSRDNFLYHEMISHPALFTHTAPKCVVIIGGGDCGTLREVLKHPDIEQVTQCDIDEQVTRMAEKHFPELCTSNNDPRATLLFSDGVAYMADCPTNSVDVIIVDSTDPVGPAKGLFNRTFYESCFRALKNDGLLIQQSESPLALLELIKEMRHEMSKAGFKAFKTLPFPQPCYPTGWWSVTLSSKQPNANFAFRQTDAQTKPFDTLYYNAHLHHGVLVPPPFIAHALGE.

One can recognise a PABS domain in the interval 5-241 (DTWFTEHFQT…GWWSVTLSSK (237 aa)). Residue Q35 coordinates S-methyl-5'-thioadenosine. Spermidine contacts are provided by H66 and D90. Residues D110 and 141 to 142 (DG) contribute to the S-methyl-5'-thioadenosine site. D160 (proton acceptor) is an active-site residue. A spermidine-binding site is contributed by 160–163 (DSTD). P167 contributes to the S-methyl-5'-thioadenosine binding site.

Belongs to the spermidine/spermine synthase family. Homodimer or homotetramer.

It is found in the cytoplasm. The catalysed reaction is S-adenosyl 3-(methylsulfanyl)propylamine + putrescine = S-methyl-5'-thioadenosine + spermidine + H(+). It participates in amine and polyamine biosynthesis; spermidine biosynthesis; spermidine from putrescine: step 1/1. In terms of biological role, catalyzes the irreversible transfer of a propylamine group from the amino donor S-adenosylmethioninamine (decarboxy-AdoMet) to putrescine (1,4-diaminobutane) to yield spermidine. In Xylella fastidiosa (strain Temecula1 / ATCC 700964), this protein is Polyamine aminopropyltransferase.